The sequence spans 151 residues: Deoxyuridine 5'-triphosphate nucleotidohydrolase (151 aa).

Substrate is bound by residues 70–72 (RSG), asparagine 83, 87–89 (LID), and methionine 97.

This sequence belongs to the dUTPase family. It depends on Mg(2+) as a cofactor.

The enzyme catalyses dUTP + H2O = dUMP + diphosphate + H(+). It participates in pyrimidine metabolism; dUMP biosynthesis; dUMP from dCTP (dUTP route): step 2/2. This enzyme is involved in nucleotide metabolism: it produces dUMP, the immediate precursor of thymidine nucleotides and it decreases the intracellular concentration of dUTP so that uracil cannot be incorporated into DNA. This Pseudomonas putida (strain ATCC 47054 / DSM 6125 / CFBP 8728 / NCIMB 11950 / KT2440) protein is Deoxyuridine 5'-triphosphate nucleotidohydrolase.